A 675-amino-acid chain; its full sequence is Gastrula zinc finger protein xFG20-1 (675 aa).

10 consecutive C2H2-type zinc fingers follow at residues 62-84, 90-112, 118-140, 146-168, 174-196, 202-224, 257-279, 286-308, 344-366, and 373-395; these read FTCT…IRAH, FSCM…YSVH, FSCT…LRVH, YSCE…QRTH, FSCT…LKTH, HLCA…QKIH, FPCT…QSTH, and LPCT…QSTH. Residues 302-325 are disordered; it reads RTHQSTHTEGQKSLPSTESGGTFS. Over residues 304 to 325 the composition is skewed to polar residues; it reads HQSTHTEGQKSLPSTESGGTFS. The span at 390-407 shows a compositional bias: polar residues; that stretch reads THQSTHTSPSTEFGVQTT. The tract at residues 390 to 423 is disordered; that stretch reads THQSTHTSPSTEFGVQTTEDNHQSPSKDHTGEKP. The span at 408 to 421 shows a compositional bias: basic and acidic residues; the sequence is EDNHQSPSKDHTGE. C2H2-type zinc fingers lie at residues 424-446, 452-474, 480-501, 507-529, 535-557, 563-585, 591-613, and 619-642; these read FSCS…LVVH, YHCI…QRTH, FSCN…YRVH, YPCT…YKVH, YPCQ…LRTH, FSCT…LTTH, FSCT…YKMH, and FTCT…TTVH.

It belongs to the krueppel C2H2-type zinc-finger protein family.

The protein resides in the nucleus. Functionally, may be involved in transcriptional regulation. The polypeptide is Gastrula zinc finger protein xFG20-1 (Xenopus laevis (African clawed frog)).